The sequence spans 118 residues: Holo-[acyl-carrier-protein] synthase (118 aa).

2 residues coordinate Mg(2+): Asp8 and Glu58.

It belongs to the P-Pant transferase superfamily. AcpS family. Mg(2+) is required as a cofactor.

Its subcellular location is the cytoplasm. It catalyses the reaction apo-[ACP] + CoA = holo-[ACP] + adenosine 3',5'-bisphosphate + H(+). Transfers the 4'-phosphopantetheine moiety from coenzyme A to a Ser of acyl-carrier-protein. The sequence is that of Holo-[acyl-carrier-protein] synthase from Streptococcus pyogenes serotype M12 (strain MGAS2096).